A 383-amino-acid chain; its full sequence is Deoxyguanosinetriphosphate triphosphohydrolase-like protein (383 aa).

Residues 62–198 (RLTHSLEVST…AALADDISYI (137 aa)) form the HD domain.

The protein belongs to the dGTPase family. Type 2 subfamily.

The chain is Deoxyguanosinetriphosphate triphosphohydrolase-like protein from Rickettsia bellii (strain RML369-C).